Here is a 245-residue protein sequence, read N- to C-terminus: Bax inhibitor 1 (245 aa).

Residues 1 to 30 lie on the Cytoplasmic side of the membrane; sequence MADTANYINDRFQTFMNGLGDRYEPYVREH. Residues 31-51 form a helical membrane-spanning segment; it reads LSKVYMVLGSTAAATAMGAML. Topologically, residues 52–55 are lumenal; that stretch reads QMRD. Residues 56–76 traverse the membrane as a helical segment; that stretch reads FLDLGVLAAVATLVLVLGLHF. Over 77 to 88 the chain is Cytoplasmic; sequence YKDDGKNYYTRL. Residues 89 to 109 form a helical membrane-spanning segment; it reads GMLYAFGFCSGQTLGPLLGYI. Residues 110–115 are Lumenal-facing; sequence CSINPA. The chain crosses the membrane as a helical span at residues 116–136; the sequence is IILSALTGTFVTFISLSLSAL. Residues 137–142 lie on the Cytoplasmic side of the membrane; it reads LAEQGK. Residues 143-163 form a helical membrane-spanning segment; the sequence is YLYLGGMLVSVINTMALLSLF. Residues 164-169 lie on the Lumenal side of the membrane; sequence NMVFKS. Residues 170–190 form a helical membrane-spanning segment; sequence YFVQVTQLYVGVFVMAAFIVY. The Cytoplasmic portion of the chain corresponds to 191 to 245; that stretch reads DTQNIVEKCRNGNRDVVQHALDLFFDVLSMFRRLLIILTQKEERKQNERRQNKTK.

It belongs to the BI1 family.

It localises to the endoplasmic reticulum membrane. Its function is as follows. Suppressor of apoptosis. Modulates unfolded protein response signaling. Negatively regulates autophagy and autophagosome formation, especially during periods of nutrient deprivation, and reduces cell survival during starvation. In Drosophila melanogaster (Fruit fly), this protein is Bax inhibitor 1.